We begin with the raw amino-acid sequence, 124 residues long: NADH-quinone oxidoreductase subunit A (124 aa).

The next 3 helical transmembrane spans lie at 11-31 (YLPIAIFFGIATLVSSLIMIL), 68-88 (LVAILFIIFDLEITFLVPWAI), and 93-113 (IGKIGFFSMMFFLFVLTIGFV).

This sequence belongs to the complex I subunit 3 family. As to quaternary structure, NDH-1 is composed of 14 different subunits. Subunits NuoA, H, J, K, L, M, N constitute the membrane sector of the complex.

It localises to the cell inner membrane. The catalysed reaction is a quinone + NADH + 5 H(+)(in) = a quinol + NAD(+) + 4 H(+)(out). In terms of biological role, NDH-1 shuttles electrons from NADH, via FMN and iron-sulfur (Fe-S) centers, to quinones in the respiratory chain. The immediate electron acceptor for the enzyme in this species is believed to be ubiquinone. Couples the redox reaction to proton translocation (for every two electrons transferred, four hydrogen ions are translocated across the cytoplasmic membrane), and thus conserves the redox energy in a proton gradient. This Rickettsia bellii (strain RML369-C) protein is NADH-quinone oxidoreductase subunit A.